A 348-amino-acid polypeptide reads, in one-letter code: UDP-3-O-acylglucosamine N-acyltransferase (348 aa).

The active-site Proton acceptor is the H241.

Belongs to the transferase hexapeptide repeat family. LpxD subfamily. As to quaternary structure, homotrimer.

The catalysed reaction is a UDP-3-O-[(3R)-3-hydroxyacyl]-alpha-D-glucosamine + a (3R)-hydroxyacyl-[ACP] = a UDP-2-N,3-O-bis[(3R)-3-hydroxyacyl]-alpha-D-glucosamine + holo-[ACP] + H(+). It participates in bacterial outer membrane biogenesis; LPS lipid A biosynthesis. Its function is as follows. Catalyzes the N-acylation of UDP-3-O-acylglucosamine using 3-hydroxyacyl-ACP as the acyl donor. Is involved in the biosynthesis of lipid A, a phosphorylated glycolipid that anchors the lipopolysaccharide to the outer membrane of the cell. The chain is UDP-3-O-acylglucosamine N-acyltransferase from Neisseria meningitidis serogroup B (strain ATCC BAA-335 / MC58).